A 567-amino-acid chain; its full sequence is MADPYGDGKGLKQQQRQKLKPALEVEDFINLLHGSDPVRVELTRLENELQYKEKELGEAQAEIKALRLSERAREKAVEDLTEELTKVDGKLKLTESLLESKNLEAKKINDEKKAALAAQFAAEATLRRVHAAQKDDDMPPIEAILAPLEAELKLARHEIAKLQDDNRALDRLTKSKEAALLEAERTVQIALAKASLVDDLQNKNQELMKQIEICQEENKILDRMHRQKVAEVEKLTQTVRELEEAVLAGGAAANAVRDYQRKVQEMNEERKTLDRELARAKVSANRVAVVVANEWKDGNDKVMPVKQWLEERRILQGEMQQLRDKLAIAERAARSEAQLKDKFQLRLKVLEEGLRMSTTRTNVSAARRQSIGGADSLSKTNGFLSKRPSFQMRSSVSTTTTTLVNHAKGASKSFDGGCRSLDRYKGHVNGSGMNVSTDSSEDKESNNSDEKANEFTSVETEDTVSGLLYDTLQKEVIALRKACHEKDQSLKDKDDAVEMLAKKVDTLTKAMESEGKKRRMEVAAMEKEMAALRLEKEQDNKAKRFGSSSSQLPPGRTLPRSGSARNM.

Residues 38–341 (VRVELTRLEN…AARSEAQLKD (304 aa)) are a coiled coil. The required for targeting to microtubules stretch occupies residues 220-440 (ILDRMHRQKV…SGMNVSTDSS (221 aa)). 2 disordered regions span residues 425–457 (KGHVNGSGMNVSTDSSEDKESNNSDEKANEFTS) and 534–567 (LEKEQDNKAKRFGSSSSQLPPGRTLPRSGSARNM). Residues 440–453 (SEDKESNNSDEKAN) are compositionally biased toward basic and acidic residues. Residues 516–545 (KKRRMEVAAMEKEMAALRLEKEQDNKAKRF) adopt a coiled-coil conformation.

This sequence belongs to the MAP70 family.

The protein resides in the cytoplasm. It is found in the cytoskeleton. Functionally, plant-specific protein that interact with microtubules. This is Microtubule-associated protein 70-1 (MAP70.1) from Oryza sativa subsp. japonica (Rice).